A 102-amino-acid chain; its full sequence is Small ribosomal subunit protein uS10 (102 aa).

It belongs to the universal ribosomal protein uS10 family. In terms of assembly, part of the 30S ribosomal subunit.

In terms of biological role, involved in the binding of tRNA to the ribosomes. The chain is Small ribosomal subunit protein uS10 from Sulfurihydrogenibium sp. (strain YO3AOP1).